The sequence spans 472 residues: 3-isopropylmalate dehydratase large subunit (472 aa).

Residues Cys-350, Cys-411, and Cys-414 each contribute to the [4Fe-4S] cluster site.

It belongs to the aconitase/IPM isomerase family. LeuC type 1 subfamily. Heterodimer of LeuC and LeuD. Requires [4Fe-4S] cluster as cofactor.

It catalyses the reaction (2R,3S)-3-isopropylmalate = (2S)-2-isopropylmalate. It functions in the pathway amino-acid biosynthesis; L-leucine biosynthesis; L-leucine from 3-methyl-2-oxobutanoate: step 2/4. Its function is as follows. Catalyzes the isomerization between 2-isopropylmalate and 3-isopropylmalate, via the formation of 2-isopropylmaleate. The polypeptide is 3-isopropylmalate dehydratase large subunit (Alcanivorax borkumensis (strain ATCC 700651 / DSM 11573 / NCIMB 13689 / SK2)).